Reading from the N-terminus, the 479-residue chain is Arf-GAP domain and FG repeat-containing protein 2 (479 aa).

Residues 27 to 153 form the Arf-GAP domain; it reads EVWCRRVREL…WYVPPEQVKG (127 aa). Residues 47-70 form a C4-type zinc finger; it reads CFECAQRGVTYVDITVGSFVCTTC. Disordered regions lie at residues 150–223 and 450–479; these read QVKG…TKKA and LSQPAGISTNPFMTGSSAFASKPPTTNPFL. Over residues 157-167 the composition is skewed to polar residues; the sequence is SKGSVSATPVQ. An N6-acetyllysine modification is found at K174. Residues 194-218 show a composition bias toward low complexity; it reads SSQPGSQSQARSSSQARSSQPPSHS. Residues 454–479 show a composition bias toward polar residues; it reads AGISTNPFMTGSSAFASKPPTTNPFL.

In terms of assembly, interacts with EPS15R.

This chain is Arf-GAP domain and FG repeat-containing protein 2 (Agfg2), found in Mus musculus (Mouse).